We begin with the raw amino-acid sequence, 134 residues long: Cytochrome b (134 aa).

3 consecutive transmembrane segments (helical) span residues 33 to 53 (FGSL…FLAM), 77 to 98 (WILR…FLHV), and 113 to 133 (WNIG…GYVL). Residues His-83 and His-97 each coordinate heme b.

Belongs to the cytochrome b family. In terms of assembly, the cytochrome bc1 complex contains 11 subunits: 3 respiratory subunits (MT-CYB, CYC1 and UQCRFS1), 2 core proteins (UQCRC1 and UQCRC2) and 6 low-molecular weight proteins (UQCRH/QCR6, UQCRB/QCR7, UQCRQ/QCR8, UQCR10/QCR9, UQCR11/QCR10 and a cleavage product of UQCRFS1). This cytochrome bc1 complex then forms a dimer. Heme b is required as a cofactor.

Its subcellular location is the mitochondrion inner membrane. Component of the ubiquinol-cytochrome c reductase complex (complex III or cytochrome b-c1 complex) that is part of the mitochondrial respiratory chain. The b-c1 complex mediates electron transfer from ubiquinol to cytochrome c. Contributes to the generation of a proton gradient across the mitochondrial membrane that is then used for ATP synthesis. This chain is Cytochrome b (MT-CYB), found in Rhinolophus hipposideros (Lesser horseshoe bat).